Reading from the N-terminus, the 285-residue chain is 4-diphosphocytidyl-2-C-methyl-D-erythritol kinase (285 aa).

Lys12 is a catalytic residue. Pro95–Ser105 contacts ATP. Residue Asp137 is part of the active site.

It belongs to the GHMP kinase family. IspE subfamily.

It catalyses the reaction 4-CDP-2-C-methyl-D-erythritol + ATP = 4-CDP-2-C-methyl-D-erythritol 2-phosphate + ADP + H(+). It functions in the pathway isoprenoid biosynthesis; isopentenyl diphosphate biosynthesis via DXP pathway; isopentenyl diphosphate from 1-deoxy-D-xylulose 5-phosphate: step 3/6. In terms of biological role, catalyzes the phosphorylation of the position 2 hydroxy group of 4-diphosphocytidyl-2C-methyl-D-erythritol. The sequence is that of 4-diphosphocytidyl-2-C-methyl-D-erythritol kinase from Actinobacillus pleuropneumoniae serotype 3 (strain JL03).